The following is a 273-amino-acid chain: 29 kDa ribonucleoprotein A, chloroplastic (273 aa).

Residues 1 to 58 constitute a chloroplast transit peptide; it reads MASSASSLHFLSLTPQTLPLPKPTSQTTSLSFFSLPPSSLNLSLSSSSSCFSSRFVRK. The 79-residue stretch at 87–165 folds into the RRM 1 domain; sequence LKIFVGNLPF…RALRVNSGPP (79 aa). The disordered stretch occupies residues 156 to 181; the sequence is RALRVNSGPPPEKRENSSFRGGSRGG. The interval 166–187 is linker (Gly-rich); sequence PEKRENSSFRGGSRGGGSFDSS. Residues 188–266 enclose the RRM 2 domain; it reads NRVYVGNLAW…RAIRVSPAEA (79 aa).

It localises to the plastid. It is found in the chloroplast. Functionally, could be involved in splicing and/or processing of chloroplast RNA's. This Nicotiana sylvestris (Wood tobacco) protein is 29 kDa ribonucleoprotein A, chloroplastic.